The primary structure comprises 165 residues: Transcription antitermination protein NusB (165 aa).

The protein belongs to the NusB family.

In terms of biological role, involved in transcription antitermination. Required for transcription of ribosomal RNA (rRNA) genes. Binds specifically to the boxA antiterminator sequence of the ribosomal RNA (rrn) operons. This is Transcription antitermination protein NusB from Nitratidesulfovibrio vulgaris (strain DSM 19637 / Miyazaki F) (Desulfovibrio vulgaris).